A 525-amino-acid chain; its full sequence is Lysine--tRNA ligase (525 aa).

Residues 44–52 (PSGLPHIGT) carry the 'HIGH' region motif. The 'KMSKS' region signature appears at 290 to 294 (KISKS). Position 293 (lysine 293) interacts with ATP.

This sequence belongs to the class-I aminoacyl-tRNA synthetase family.

Its subcellular location is the cytoplasm. It carries out the reaction tRNA(Lys) + L-lysine + ATP = L-lysyl-tRNA(Lys) + AMP + diphosphate. The sequence is that of Lysine--tRNA ligase from Rickettsia felis (strain ATCC VR-1525 / URRWXCal2) (Rickettsia azadi).